A 70-amino-acid chain; its full sequence is NAD(P)H-quinone oxidoreductase subunit O (70 aa).

Belongs to the complex I NdhO subunit family. In terms of assembly, NDH-1 can be composed of about 15 different subunits; different subcomplexes with different compositions have been identified which probably have different functions.

The protein localises to the cellular thylakoid membrane. It carries out the reaction a plastoquinone + NADH + (n+1) H(+)(in) = a plastoquinol + NAD(+) + n H(+)(out). The enzyme catalyses a plastoquinone + NADPH + (n+1) H(+)(in) = a plastoquinol + NADP(+) + n H(+)(out). Functionally, NDH-1 shuttles electrons from an unknown electron donor, via FMN and iron-sulfur (Fe-S) centers, to quinones in the respiratory and/or the photosynthetic chain. The immediate electron acceptor for the enzyme in this species is believed to be plastoquinone. Couples the redox reaction to proton translocation, and thus conserves the redox energy in a proton gradient. Cyanobacterial NDH-1 also plays a role in inorganic carbon-concentration. The sequence is that of NAD(P)H-quinone oxidoreductase subunit O from Nostoc sp. (strain PCC 7120 / SAG 25.82 / UTEX 2576).